We begin with the raw amino-acid sequence, 316 residues long: MNDVSKVSLPKAIFLMGPTASGKTALAIELRKVLPVELISVDSALIYRGMDIGTAKPNADELKAAPHRLLDIRDPSQAYSAADFRRDALAQMAEITAAGRIPLLVGGTMLYFKALLEGLSPLPSADPEVRSRIEQQAAELGWEALHQQLQEIDPVAAARIHPNDPQRLSRALEVFFISGKTLTELTQTSGDALPYQVHQFAIAPASRELLHQRIELRFHQMLASGFEAEVRALFARGDLHTDLPSIRCVGYRQMWSYIEGEISYDEMVYRGVCSTRQLAKRQMTWLRGWEGVRWLDSENPDRARKEVLQVVGAIAD.

17-24 contacts ATP; sequence GPTASGKT. 19 to 24 provides a ligand contact to substrate; that stretch reads TASGKT. 3 interaction with substrate tRNA regions span residues 42–45, 166–170, and 247–252; these read DSAL, QRLSR, and RCVGYR.

The protein belongs to the IPP transferase family. Monomer. Mg(2+) is required as a cofactor.

The enzyme catalyses adenosine(37) in tRNA + dimethylallyl diphosphate = N(6)-dimethylallyladenosine(37) in tRNA + diphosphate. Functionally, catalyzes the transfer of a dimethylallyl group onto the adenine at position 37 in tRNAs that read codons beginning with uridine, leading to the formation of N6-(dimethylallyl)adenosine (i(6)A). The protein is tRNA dimethylallyltransferase of Salmonella typhi.